Consider the following 78-residue polypeptide: Delta-conotoxin-like S6.8 (78 aa).

The first 22 residues, 1-22, serve as a signal peptide directing secretion; it reads MKLTCMMIVAVLFLTAWTFVTA. A propeptide spanning residues 23–53 is cleaved from the precursor; sequence DDSRNGLKNLFPKARHEMKNPDASKLNKRDG. 3 disulfide bridges follow: cysteine 54–cysteine 69, cysteine 61–cysteine 73, and cysteine 68–cysteine 77.

It belongs to the conotoxin O1 superfamily. Expressed by the venom duct.

The protein resides in the secreted. Delta-conotoxins bind to site 6 of voltage-gated sodium channels (Nav) and inhibit the inactivation process. This is Delta-conotoxin-like S6.8 from Conus striatus (Striated cone).